A 439-amino-acid polypeptide reads, in one-letter code: Large ribosomal subunit protein mL65 (439 aa).

The protein belongs to the mitochondrion-specific ribosomal protein mL65 family. In terms of assembly, component of the mitochondrial large ribosomal subunit (mt-LSU). Mature mammalian 55S mitochondrial ribosomes consist of a small (28S) and a large (39S) subunit. The 28S small subunit contains a 12S ribosomal RNA (12S mt-rRNA) and 30 different proteins. The 39S large subunit contains a 16S rRNA (16S mt-rRNA), a copy of mitochondrial valine transfer RNA (mt-tRNA(Val)), which plays an integral structural role, and 52 different proteins. mL65 forms a heterodimer with mL37. As to expression, heart, skeletal muscle, kidney and liver. Lower expression in placenta and peripheral blood leukocytes.

It localises to the mitochondrion. In Homo sapiens (Human), this protein is Large ribosomal subunit protein mL65 (MRPS30).